We begin with the raw amino-acid sequence, 397 residues long: 3-ketoacyl-CoA thiolase, mitochondrial (397 aa).

A mitochondrion; not cleaved-targeting transit peptide spans 1–16; it reads MALLRGVFIVAAKRTP. An N6-acetyllysine; alternate modification is found at Lys25. Residue Lys25 is modified to N6-succinyllysine; alternate. The active-site Acyl-thioester intermediate is Cys92. Thr119 is modified (phosphothreonine). Position 121 is a phosphoserine (Ser121). Tyr127 is modified (phosphotyrosine). Thr136 bears the Phosphothreonine mark. At Lys137 the chain carries N6-acetyllysine; alternate. Residue Lys137 is modified to N6-succinyllysine; alternate. Ser140 carries the post-translational modification Phosphoserine. N6-acetyllysine; alternate occurs at positions 143, 171, 191, and 209. Residues Lys143, Lys171, Lys191, and Lys209 each carry the N6-succinyllysine; alternate modification. 2 positions are modified to N6-succinyllysine: Lys212 and Lys214. CoA is bound by residues Arg224 and Thr227. Lys234 carries the N6-acetyllysine; alternate modification. N6-succinyllysine; alternate is present on Lys234. Lys240 is modified (N6-succinyllysine). Lys241 carries the post-translational modification N6-acetyllysine. Ser251 contributes to the CoA binding site. Lys269 and Lys270 each carry N6-acetyllysine. Lys305 is modified (N6-acetyllysine; alternate). At Lys305 the chain carries N6-succinyllysine; alternate. Phosphoserine is present on Ser310. Lys312 carries the post-translational modification N6-acetyllysine; alternate. An N6-succinyllysine; alternate modification is found at Lys312. Ser333 bears the Phosphoserine mark. N6-acetyllysine is present on residues Lys340 and Lys375. The active-site Proton donor/acceptor is the Cys382.

The protein belongs to the thiolase-like superfamily. Thiolase family. In terms of assembly, homotetramer. Interacts with BNIP3.

Its subcellular location is the mitochondrion. It catalyses the reaction an acyl-CoA + acetyl-CoA = a 3-oxoacyl-CoA + CoA. The catalysed reaction is 2 acetyl-CoA = acetoacetyl-CoA + CoA. It carries out the reaction acetyl-CoA + H2O = acetate + CoA + H(+). The enzyme catalyses propanoyl-CoA + H2O = propanoate + CoA + H(+). It catalyses the reaction butanoyl-CoA + H2O = butanoate + CoA + H(+). The catalysed reaction is hexanoyl-CoA + H2O = hexanoate + CoA + H(+). It carries out the reaction octanoyl-CoA + H2O = octanoate + CoA + H(+). The enzyme catalyses decanoyl-CoA + H2O = decanoate + CoA + H(+). It catalyses the reaction dodecanoyl-CoA + H2O = dodecanoate + CoA + H(+). The catalysed reaction is tetradecanoyl-CoA + H2O = tetradecanoate + CoA + H(+). It carries out the reaction hexadecanoyl-CoA + H2O = hexadecanoate + CoA + H(+). Its pathway is lipid metabolism; fatty acid beta-oxidation. In the production of energy from fats, this is one of the enzymes that catalyzes the last step of the mitochondrial beta-oxidation pathway, an aerobic process breaking down fatty acids into acetyl-CoA. Using free coenzyme A/CoA, catalyzes the thiolytic cleavage of medium- to long-chain unbranched 3-oxoacyl-CoAs into acetyl-CoA and a fatty acyl-CoA shortened by two carbon atoms. Also catalyzes the condensation of two acetyl-CoA molecules into acetoacetyl-CoA and could be involved in the production of ketone bodies. Also displays hydrolase activity on various fatty acyl-CoAs. Thereby, could be responsible for the production of acetate in a side reaction to beta-oxidation. Abolishes BNIP3-mediated apoptosis and mitochondrial damage. This is 3-ketoacyl-CoA thiolase, mitochondrial (ACAA2) from Bos taurus (Bovine).